A 137-amino-acid chain; its full sequence is Acidic phospholipase A2 CC-PLA2-1 (137 aa).

Residues 1-16 (MRTLWIVAVWLMGVEG) form the signal peptide. 7 cysteine pairs are disulfide-bonded: C42-C130, C44-C60, C59-C110, C65-C137, C66-C103, C73-C96, and C90-C101. 3 residues coordinate Ca(2+): Y43, G45, and G47. Residue H63 is part of the active site. D64 is a binding site for Ca(2+). Residue D104 is part of the active site.

Belongs to the phospholipase A2 family. Group II subfamily. D49 sub-subfamily. Ca(2+) is required as a cofactor. In terms of processing, glycosylated (2.5%). In terms of tissue distribution, expressed by the venom gland.

It is found in the secreted. It catalyses the reaction a 1,2-diacyl-sn-glycero-3-phosphocholine + H2O = a 1-acyl-sn-glycero-3-phosphocholine + a fatty acid + H(+). Snake venom phospholipase A2 (PLA2) that inhibits blood coagulation and platelet aggregation induced by ADP and arachidonic acid. Inhibits tumor cell adhesion and migration in a dose-dependent manner. Abolishes the attachment of human brain microvascular endothelial cells (HBMEC) to fibrinogen (IC(50)=0.12 uM) and dramatically reduces its adhesion to fibronectin (IC(50)=0.12 uM), whereas no effect is observed on type I collagen, vitronectin or laminin 1. Also blocks the cell migration toward fibronectin and fibrinogen. These effects are not dependent of the catalytic activity, but are mediated by alpha-5/beta-1 (ITGA5/ITGB1) and alpha-v-containing (ITGAV) integrins. Also shows anti-angiogenic activity in chicken chorioallantoix membrane assay. Has a relatively high enzymatic activity. PLA2 catalyzes the calcium-dependent hydrolysis of the 2-acyl groups in 3-sn-phosphoglycerides. In Cerastes cerastes (Horned desert viper), this protein is Acidic phospholipase A2 CC-PLA2-1.